The chain runs to 184 residues: Inorganic pyrophosphatase (184 aa).

Lys19, Arg33, and Tyr45 together coordinate substrate. Mg(2+) contacts are provided by Asp55, Asp60, and Asp92. Residue Tyr129 participates in substrate binding.

Belongs to the PPase family. Homohexamer. Mg(2+) serves as cofactor.

It is found in the cytoplasm. The enzyme catalyses diphosphate + H2O = 2 phosphate + H(+). Its function is as follows. Catalyzes the hydrolysis of inorganic pyrophosphate (PPi) forming two phosphate ions. The chain is Inorganic pyrophosphatase from Mycoplasma pneumoniae (strain ATCC 29342 / M129 / Subtype 1) (Mycoplasmoides pneumoniae).